Consider the following 419-residue polypeptide: Glutamate dehydrogenase (419 aa).

Residue Lys-105 is part of the active site. 219-225 contributes to the NAD(+) binding site; that stretch reads GYGNAGY.

The protein belongs to the Glu/Leu/Phe/Val dehydrogenases family. Homohexamer.

The enzyme catalyses L-glutamate + NAD(+) + H2O = 2-oxoglutarate + NH4(+) + NADH + H(+). The catalysed reaction is L-glutamate + NADP(+) + H2O = 2-oxoglutarate + NH4(+) + NADPH + H(+). The polypeptide is Glutamate dehydrogenase (gdhA) (Thermococcus profundus).